Consider the following 221-residue polypeptide: Ras-related protein Rab-28 (221 aa).

N-acetylserine is present on Ser2. Ser8 carries the phosphoserine modification. Residues Gly21, Gly24, Lys25, Thr26, Ser27, Gly38, Lys39, Tyr41, and Thr44 each contribute to the GTP site. Thr26 is a Mg(2+) binding site. Residues 35-49 (ETFGKQYKQTIGLDF) are switch I. 2 residues coordinate Mg(2+): Thr44 and Asp68. The interval 68-85 (DIGGQTIGGKMLDKYIYG) is switch II. Gly71, Asn129, Lys130, Asp132, Ala160, and Lys161 together coordinate GTP. A Cysteine methyl ester modification is found at Cys218. Cys218 carries the S-farnesyl cysteine lipid modification. Positions 219 to 221 (AVQ) are cleaved as a propeptide — removed in mature form.

The protein belongs to the small GTPase superfamily. Rab family. Interacts (prenylated form) with PDE6D; the interaction promotes RAB28 delivery to the photoreceptor outer segments. Interacts with KCNJ13; the interaction may facilitate cone outer segments phagocytosis. Interacts with RELA; the interaction contributes to RELA transport from cytoplasm to nucleus. Mg(2+) is required as a cofactor. Isoprenylated. In terms of tissue distribution, testis, brain, and to much lower levels heart, skeletal muscle and fat cells. Expressed in the retina.

It is found in the cell membrane. The protein resides in the cytoplasm. The protein localises to the cytoskeleton. Its subcellular location is the cilium basal body. It localises to the nucleus. It catalyses the reaction GTP + H2O = GDP + phosphate + H(+). Its activity is regulated as follows. Regulated by guanine nucleotide exchange factors (GEFs) which promote the exchange of bound GDP for free GTP. Regulated by GTPase activating proteins (GAPs) which increase the GTP hydrolysis activity. Inhibited by GDP dissociation inhibitors (GDIs). Functionally, the small GTPases Rab are key regulators of intracellular membrane trafficking, from the formation of transport vesicles to their fusion with membranes. Rabs cycle between an inactive GDP-bound form and an active GTP-bound form that is able to recruit to membranes different sets of downstream effectors directly responsible for vesicle formation, movement, tethering and fusion. RAB28 is required for shedding and phagocytosis of cone cell outer segments (OS) discs in the retina. Also participates in nuclear factor kappa-B p65/RELA nuclear transport in endothelial cells. This Rattus norvegicus (Rat) protein is Ras-related protein Rab-28.